The chain runs to 438 residues: Zinc finger protein 641 (438 aa).

The tract at residues Met-1–Thr-53 is disordered. The segment covering Ser-17–Val-32 has biased composition (polar residues). The segment covering Gln-40–Trp-51 has biased composition (basic and acidic residues). Residues Val-109–Ile-181 enclose the KRAB domain. The tract at residues Pro-171 to Thr-265 is transactivation. Ser-191 carries the phosphoserine modification. C2H2-type zinc fingers lie at residues His-264–His-286, Tyr-292–His-314, and Ser-320–His-342. Positions Gly-345 to Pro-367 are disordered. 2 consecutive C2H2-type zinc fingers follow at residues His-372 to His-394 and Phe-400 to His-422. The disordered stretch occupies residues His-418–Phe-438. Polar residues predominate over residues His-422 to Phe-438. At Ser-426 the chain carries Phosphoserine.

It belongs to the krueppel C2H2-type zinc-finger protein family. In terms of tissue distribution, highly expressed in skeletal muscle, moderate expression in heart, liver, and pancreas, lower expression in placenta, no expression seen in brain, lung, and kidney.

The protein localises to the nucleus. Its function is as follows. Transcriptional activator. Activates transcriptional activities of SRE and AP-1. This chain is Zinc finger protein 641 (ZNF641), found in Homo sapiens (Human).